Consider the following 46-residue polypeptide: Protein PsbN (46 aa).

Residues 7–27 (GLSIAITFAVILLALTGFSIY) traverse the membrane as a helical segment.

This sequence belongs to the PsbN family.

The protein localises to the cellular thylakoid membrane. In terms of biological role, may play a role in photosystem I and II biogenesis. The polypeptide is Protein PsbN (Synechococcus elongatus (strain ATCC 33912 / PCC 7942 / FACHB-805) (Anacystis nidulans R2)).